Consider the following 232-residue polypeptide: 5'-methylthioadenosine/S-adenosylhomocysteine nucleosidase (232 aa).

Glutamate 14 (proton acceptor) is an active-site residue. Residues glycine 80, valine 154, and 175 to 176 (ME) contribute to the substrate site. The active-site Proton donor is the aspartate 199.

It belongs to the PNP/UDP phosphorylase family. MtnN subfamily.

The catalysed reaction is S-adenosyl-L-homocysteine + H2O = S-(5-deoxy-D-ribos-5-yl)-L-homocysteine + adenine. The enzyme catalyses S-methyl-5'-thioadenosine + H2O = 5-(methylsulfanyl)-D-ribose + adenine. It catalyses the reaction 5'-deoxyadenosine + H2O = 5-deoxy-D-ribose + adenine. It participates in amino-acid biosynthesis; L-methionine biosynthesis via salvage pathway; S-methyl-5-thio-alpha-D-ribose 1-phosphate from S-methyl-5'-thioadenosine (hydrolase route): step 1/2. In terms of biological role, catalyzes the irreversible cleavage of the glycosidic bond in both 5'-methylthioadenosine (MTA) and S-adenosylhomocysteine (SAH/AdoHcy) to adenine and the corresponding thioribose, 5'-methylthioribose and S-ribosylhomocysteine, respectively. Also cleaves 5'-deoxyadenosine, a toxic by-product of radical S-adenosylmethionine (SAM) enzymes, into 5-deoxyribose and adenine. This is 5'-methylthioadenosine/S-adenosylhomocysteine nucleosidase from Haemophilus ducreyi (strain 35000HP / ATCC 700724).